Reading from the N-terminus, the 327-residue chain is MTATKQHKKVILVGDGAVGSAYAYALVNQGIGQELGIIDINKDRTQGDAEDLSHALAFTFPKKIYSAEYSDAHDADLVVLTAGLPQKPGETRLELVEKNLRINQQIVTEIVNSGFNGIFLVAANPVDVLTYSTWKFSGFPKERVIGSGTSLDSARFRQALAEKIGIDARSVHAYIMGEHGDSEFAVWSHANVAGVKLYDWLQDNRDIDEQGLVDLFVSVRDAAYSIINKKGATYYGIGVALARITKAIFDDENAVLPLSVYQAGQYEGVEDVFIGQPAIIGAHGIVRPVNIPLSDAELQKMQASAKQLKDIIDDAFANPEIAAGVKN.

NAD(+) is bound by residues V18, D39, R44, Y69, and 83–84 (GL). Substrate-binding positions include Q86, R92, and 124 to 127 (NPVD). Residues 122-124 (AAN) and S147 each bind NAD(+). A substrate-binding site is contributed by 152–155 (DSAR). R157 and H172 together coordinate beta-D-fructose 1,6-bisphosphate. The active-site Proton acceptor is H179. The residue at position 224 (Y224) is a Phosphotyrosine. T233 lines the substrate pocket.

It belongs to the LDH/MDH superfamily. LDH family. As to quaternary structure, homotetramer.

It is found in the cytoplasm. The enzyme catalyses (S)-lactate + NAD(+) = pyruvate + NADH + H(+). It participates in fermentation; pyruvate fermentation to lactate; (S)-lactate from pyruvate: step 1/1. Allosterically activated by fructose 1,6-bisphosphate (FBP). Its function is as follows. Catalyzes the conversion of lactate to pyruvate. The sequence is that of L-lactate dehydrogenase from Streptococcus suis (strain 98HAH33).